The chain runs to 338 residues: Penicillin V acylase (338 aa).

Positions 1–3 are cleaved as a propeptide — removed in mature form; sequence MLG. The active-site Nucleophile is the cysteine 4.

The protein belongs to the peptidase C59 family. Homotetramer. Post-translationally, expressed as an inactive precursor that is cleaved autocatalytically at Gly-3/Cys-4 to generate an active enzyme. Processing exposes a catalytic N-terminal nucleophile residue with a free alpha amino group.

The catalysed reaction is a penicillin + H2O = 6-aminopenicillanate + a carboxylate. Hydrolase activity is rapidly inhibited by lysine modifying reagents. In terms of biological role, catalyzes the hydrolysis of penicillin V to 6-aminopenicillanate (6-APA). Exhibits high specificity for penicillin V. Penicillin G and other related compounds are hydrolyzed at less than 10% of the rate of penicillin V. Among the cephalosporins, cephalosporin C is resistant to cleavage, whereas cephalosporin G is cleaved at about 1% of the rate of cleavage of penicillin V. This is Penicillin V acylase from Lysinibacillus sphaericus (Bacillus sphaericus).